The primary structure comprises 421 residues: Periplasmic [Fe] hydrogenase large subunit (421 aa).

2 4Fe-4S ferredoxin-type domains span residues 26–57 (HFVQ…MGEP) and 59–86 (SIPH…EAQS). Residues Cys-35, Cys-38, Cys-41, Cys-45, Cys-66, Cys-69, Cys-72, Cys-76, Cys-179, Cys-234, Cys-378, and Cys-382 each coordinate [4Fe-4S] cluster. Residue Cys-382 participates in Fe(2+) binding.

Heterodimer of a large and a small subunit. Requires [4Fe-4S] cluster as cofactor. It depends on Fe(2+) as a cofactor.

The protein localises to the periplasm. It carries out the reaction H2 + 2 oxidized [2Fe-2S]-[ferredoxin] = 2 reduced [2Fe-2S]-[ferredoxin] + 2 H(+). Its function is as follows. May be involved in hydrogen uptake for the reduction of sulfate to hydrogen sulfide in an electron transport chain. Cytochrome c3 is likely to be the physiological electron carrier for the enzyme. The sequence is that of Periplasmic [Fe] hydrogenase large subunit (hydA) from Nitratidesulfovibrio vulgaris (strain ATCC 29579 / DSM 644 / CCUG 34227 / NCIMB 8303 / VKM B-1760 / Hildenborough) (Desulfovibrio vulgaris).